The following is a 144-amino-acid chain: Large ribosomal subunit protein uL16 (144 aa).

This sequence belongs to the universal ribosomal protein uL16 family. Part of the 50S ribosomal subunit.

In terms of biological role, binds 23S rRNA and is also seen to make contacts with the A and possibly P site tRNAs. This Bacillus cytotoxicus (strain DSM 22905 / CIP 110041 / 391-98 / NVH 391-98) protein is Large ribosomal subunit protein uL16.